The primary structure comprises 122 residues: Large ribosomal subunit protein uL14 (122 aa).

Belongs to the universal ribosomal protein uL14 family. As to quaternary structure, part of the 50S ribosomal subunit. Forms a cluster with proteins L3 and L19. In the 70S ribosome, L14 and L19 interact and together make contacts with the 16S rRNA in bridges B5 and B8.

Its function is as follows. Binds to 23S rRNA. Forms part of two intersubunit bridges in the 70S ribosome. The polypeptide is Large ribosomal subunit protein uL14 (Mycoplasma mobile (strain ATCC 43663 / 163K / NCTC 11711) (Mesomycoplasma mobile)).